The chain runs to 510 residues: F-box only protein 15 (510 aa).

One can recognise an F-box domain in the interval 77–117; sequence MPSEILLKIFSYLDAVSLLCTGCVSRRFYHLANDNFIWIGI.

As to quaternary structure, directly interacts with SKP1 and CUL1.

Its function is as follows. Substrate-recognition component of the SCF (SKP1-CUL1-F-box protein)-type E3 ubiquitin ligase complex. This chain is F-box only protein 15 (FBXO15), found in Homo sapiens (Human).